Here is a 208-residue protein sequence, read N- to C-terminus: Small ribosomal subunit protein uS4A (208 aa).

The S4 RNA-binding domain maps to 98 to 159 (SRLDNVAYNM…HAKSYLRIKA (62 aa)).

The protein belongs to the universal ribosomal protein uS4 family. As to quaternary structure, part of the 30S ribosomal subunit. Contacts protein S5. The interaction surface between S4 and S5 is involved in control of translational fidelity.

In terms of biological role, one of the primary rRNA binding proteins, it binds directly to 16S rRNA where it nucleates assembly of the body of the 30S subunit. With S5 and S12 plays an important role in translational accuracy. This Nitrosomonas europaea (strain ATCC 19718 / CIP 103999 / KCTC 2705 / NBRC 14298) protein is Small ribosomal subunit protein uS4A (rpsD1).